The following is a 265-amino-acid chain: Probable DNA replication complex GINS protein PSF3 (265 aa).

The interval 180–265 (ISTSSNNKNN…KKRKRMFDDE (86 aa)) is disordered. Positions 183–246 (SSNNKNNSSN…NNNNNSQNSS (64 aa)) are enriched in low complexity. Residues 255–265 (VKKRKRMFDDE) show a composition bias toward basic residues.

This sequence belongs to the GINS3/PSF3 family. Component of the GINS complex which is a heterotetramer of gins1, gins2, gins3 and gins4.

It localises to the nucleus. In terms of biological role, the GINS complex plays an essential role in the initiation of DNA replication. The protein is Probable DNA replication complex GINS protein PSF3 (gins3) of Dictyostelium discoideum (Social amoeba).